The primary structure comprises 571 residues: Streptolysin O (571 aa).

The signal sequence occupies residues 1–33 (MSNKKTFKKYSRVAGLLTAALIIGNLVTANAES). A disordered region spans residues 30–108 (NAESNKQNTA…KKSEEDHTEE (79 aa)). A compositionally biased stretch (low complexity) spans 37–48 (NTASTETTTTNE). Basic and acidic residues-rich tracts occupy residues 50-68 (PKPE…KTDD) and 79-108 (APKE…HTEE). Transmembrane regions (beta stranded) follow at residues 260 to 273 (KSQI…NSKI), 280 to 289 (IDFKSISKGE), 358 to 367 (SNDVEAAFSA), and 375 to 387 (KTNG…LENS). A Conserved undecapeptide motif is present at residues 529–539 (ECTGLAWEWWR). The Cholesterol binding signature appears at 561 to 562 (TL).

It belongs to the cholesterol-dependent cytolysin family. As to quaternary structure, homooligomeric pore complex of 35 to 50 subunits; when inserted in the host membrane.

It localises to the secreted. The protein localises to the host cell membrane. A cholesterol-dependent toxin that causes cytolysis by forming pores in cholesterol containing host membranes. After binding to target membranes, the protein undergoes a major conformation change, leading to its insertion in the host membrane and formation of an oligomeric pore complex. Cholesterol is required for binding to host membranes, membrane insertion and pore formation; cholesterol binding is mediated by a Thr-Leu pair in the C-terminus. Can be reversibly inactivated by oxidation. This is Streptolysin O (slo) from Streptococcus pyogenes serotype M3 (strain ATCC BAA-595 / MGAS315).